The chain runs to 272 residues: 2-C-methyl-D-erythritol 4-phosphate cytidylyltransferase (272 aa).

Belongs to the IspD/TarI cytidylyltransferase family. IspD subfamily.

The catalysed reaction is 2-C-methyl-D-erythritol 4-phosphate + CTP + H(+) = 4-CDP-2-C-methyl-D-erythritol + diphosphate. Its pathway is isoprenoid biosynthesis; isopentenyl diphosphate biosynthesis via DXP pathway; isopentenyl diphosphate from 1-deoxy-D-xylulose 5-phosphate: step 2/6. In terms of biological role, catalyzes the formation of 4-diphosphocytidyl-2-C-methyl-D-erythritol from CTP and 2-C-methyl-D-erythritol 4-phosphate (MEP). This chain is 2-C-methyl-D-erythritol 4-phosphate cytidylyltransferase, found in Xanthomonas oryzae pv. oryzae (strain MAFF 311018).